The primary structure comprises 314 residues: 4-hydroxy-3-methylbut-2-enyl diphosphate reductase (314 aa).

C12 contributes to the [4Fe-4S] cluster binding site. Residues H43 and H81 each contribute to the (2E)-4-hydroxy-3-methylbut-2-enyl diphosphate site. Dimethylallyl diphosphate-binding residues include H43 and H81. Residues H43 and H81 each contribute to the isopentenyl diphosphate site. C103 is a [4Fe-4S] cluster binding site. Position 131 (H131) interacts with (2E)-4-hydroxy-3-methylbut-2-enyl diphosphate. Residue H131 coordinates dimethylallyl diphosphate. Position 131 (H131) interacts with isopentenyl diphosphate. E133 functions as the Proton donor in the catalytic mechanism. T170 is a binding site for (2E)-4-hydroxy-3-methylbut-2-enyl diphosphate. C198 contributes to the [4Fe-4S] cluster binding site. (2E)-4-hydroxy-3-methylbut-2-enyl diphosphate-binding residues include S226, N228, and S271. Dimethylallyl diphosphate is bound by residues S226, N228, and S271. 3 residues coordinate isopentenyl diphosphate: S226, N228, and S271.

It belongs to the IspH family. Requires [4Fe-4S] cluster as cofactor.

It catalyses the reaction isopentenyl diphosphate + 2 oxidized [2Fe-2S]-[ferredoxin] + H2O = (2E)-4-hydroxy-3-methylbut-2-enyl diphosphate + 2 reduced [2Fe-2S]-[ferredoxin] + 2 H(+). It carries out the reaction dimethylallyl diphosphate + 2 oxidized [2Fe-2S]-[ferredoxin] + H2O = (2E)-4-hydroxy-3-methylbut-2-enyl diphosphate + 2 reduced [2Fe-2S]-[ferredoxin] + 2 H(+). Its pathway is isoprenoid biosynthesis; dimethylallyl diphosphate biosynthesis; dimethylallyl diphosphate from (2E)-4-hydroxy-3-methylbutenyl diphosphate: step 1/1. It participates in isoprenoid biosynthesis; isopentenyl diphosphate biosynthesis via DXP pathway; isopentenyl diphosphate from 1-deoxy-D-xylulose 5-phosphate: step 6/6. In terms of biological role, catalyzes the conversion of 1-hydroxy-2-methyl-2-(E)-butenyl 4-diphosphate (HMBPP) into a mixture of isopentenyl diphosphate (IPP) and dimethylallyl diphosphate (DMAPP). Acts in the terminal step of the DOXP/MEP pathway for isoprenoid precursor biosynthesis. The sequence is that of 4-hydroxy-3-methylbut-2-enyl diphosphate reductase from Halalkalibacterium halodurans (strain ATCC BAA-125 / DSM 18197 / FERM 7344 / JCM 9153 / C-125) (Bacillus halodurans).